The primary structure comprises 627 residues: Threonine--tRNA ligase (627 aa).

Positions 221 to 523 (DHRKLGRELG…LIEHFAGDFP (303 aa)) are catalytic. Zn(2+) is bound by residues Cys-319, His-370, and His-500.

It belongs to the class-II aminoacyl-tRNA synthetase family. Homodimer. Zn(2+) serves as cofactor.

It localises to the cytoplasm. The enzyme catalyses tRNA(Thr) + L-threonine + ATP = L-threonyl-tRNA(Thr) + AMP + diphosphate + H(+). Catalyzes the attachment of threonine to tRNA(Thr) in a two-step reaction: L-threonine is first activated by ATP to form Thr-AMP and then transferred to the acceptor end of tRNA(Thr). Also edits incorrectly charged L-seryl-tRNA(Thr). The chain is Threonine--tRNA ligase from Gloeobacter violaceus (strain ATCC 29082 / PCC 7421).